The chain runs to 398 residues: Argininosuccinate synthase (398 aa).

8-16 (AYSGGLDTS) contacts ATP. An L-citrulline-binding site is contributed by Y87. G117 provides a ligand contact to ATP. L-aspartate is bound by residues T119, N123, and D124. N123 serves as a coordination point for L-citrulline. L-citrulline contacts are provided by R127, S175, E260, and Y272.

The protein belongs to the argininosuccinate synthase family. Type 1 subfamily. As to quaternary structure, homotetramer.

Its subcellular location is the cytoplasm. It catalyses the reaction L-citrulline + L-aspartate + ATP = 2-(N(omega)-L-arginino)succinate + AMP + diphosphate + H(+). It participates in amino-acid biosynthesis; L-arginine biosynthesis; L-arginine from L-ornithine and carbamoyl phosphate: step 2/3. This is Argininosuccinate synthase from Mycobacterium tuberculosis (strain ATCC 25618 / H37Rv).